We begin with the raw amino-acid sequence, 134 residues long: Protein NrdI (134 aa).

It belongs to the NrdI family.

Probably involved in ribonucleotide reductase function. In Yersinia pseudotuberculosis serotype O:1b (strain IP 31758), this protein is Protein NrdI.